Consider the following 340-residue polypeptide: Sulfotransferase 2B1 (340 aa).

Residue Lys-67–Trp-72 coordinates 3'-phosphoadenylyl sulfate. The substrate site is built by Trp-95 and Trp-100. The active-site Proton acceptor is the His-122. 3'-phosphoadenylyl sulfate is bound by residues Arg-144, Ser-152, Tyr-207, Ser-241–Met-246, and Arg-271–Gly-273. The interval Leu-301–Gln-340 is disordered.

It belongs to the sulfotransferase 1 family. Isoform 1 is expressed in skin and testis. Higher level of isoform 2 expressed in skin and intestine, moderate level in the kidney, low level in liver, stomach and placenta.

The protein localises to the cytoplasm. It is found in the cytosol. It localises to the microsome. Its subcellular location is the nucleus. It catalyses the reaction an alcohol + 3'-phosphoadenylyl sulfate = an alkyl sulfate + adenosine 3',5'-bisphosphate + H(+). The enzyme catalyses pregnenolone + 3'-phosphoadenylyl sulfate = pregnenolone sulfate + adenosine 3',5'-bisphosphate + H(+). It carries out the reaction 3beta-hydroxyandrost-5-en-17-one + 3'-phosphoadenylyl sulfate = dehydroepiandrosterone 3-sulfate + adenosine 3',5'-bisphosphate + H(+). The catalysed reaction is cholesterol + 3'-phosphoadenylyl sulfate = cholesterol sulfate + adenosine 3',5'-bisphosphate + H(+). Sulfotransferase that utilizes 3'-phospho-5'-adenylyl sulfate (PAPS) as sulfonate donor to catalyze the sulfate conjugation. Sulfonation increases the water solubility of most compounds, and therefore their renal excretion, but it can also result in bioactivation to form active metabolites. Sulfonates cholesterol. Catalyzes sulfation of the 3beta-hydroxyl groups of steroids, such as, pregnenolone and dehydroepiandrosterone (DHEA). Conjugates efficiently cholesterol but has a greater affinity for pregnenolone sulfation. Does not show high activity with DHEA. Plays a role in epidermal cholesterol metabolism and in the regulation of epidermal proliferation and differentiation. Its function is as follows. Prefers pregnenolone over DHEA as a substrate and does not sulfate cholesterol. This is Sulfotransferase 2B1 from Rattus norvegicus (Rat).